Consider the following 166-residue polypeptide: Thioredoxin, mitochondrial (166 aa).

The transit peptide at 1-59 (MAQRLLLGRFLTSVISRKPPQGVWASLTSKTLQTPQYNAGGLTVMPSPARTVHTTRVCL) directs the protein to the mitochondrion. The 106-residue stretch at 61 to 166 (TFNVQDGPDF…LEAFLKKLIG (106 aa)) folds into the Thioredoxin domain. Active-site nucleophile residues include Cys90 and Cys93. An intrachain disulfide couples Cys90 to Cys93. Position 152 is an N6-acetyllysine; alternate (Lys152). Lys152 bears the N6-succinyllysine; alternate mark.

Belongs to the thioredoxin family. In terms of assembly, monomer.

Its subcellular location is the mitochondrion. Functionally, important for the control of mitochondrial reactive oxygen species homeostasis, apoptosis regulation and cell viability. Is involved in various redox reactions including the reduction of protein disulfide bonds, through the reversible oxidation of its active center dithiol to a disulfide. In Mus musculus (Mouse), this protein is Thioredoxin, mitochondrial (Txn2).